The chain runs to 332 residues: MSASYWDSSQRNKWQYSRESLARTRQKLWMLECQLYPQGTNILMEGGGKDAQPVTKNIPITHRDLHYDRDYNLRIYCYFLIMKLGRRLNVRQYALATAHVYLARFCLKASIREVNLYLLVTTCIYLACKVEECPQHIRTLVNEARSLWPEFVPPDPTKVTEFEFYLIEELQSYMIVHYPYRAMEQIAAALRRPPYNLVLSPDDLQNSWSLINDSYITDVHLLYPPHVIAMACLFITVCLRSAAGARDLQETFNRFMADSQVDLHEVMDTIQDFITLYDHWDKYNEPWIKFLLHNLYLRPHAGGTTVSGAAAGSAGPAGSVLTPNGTITGSTS.

Positions R74–I175 constitute a Cyclin N-terminal domain.

This sequence belongs to the cyclin family. Cyclin C subfamily. As to quaternary structure, component of the SRB8-11 complex, a regulatory module of the Mediator complex.

Its subcellular location is the nucleus. Functionally, component of the SRB8-11 complex. The SRB8-11 complex is a regulatory module of the Mediator complex which is itself involved in regulation of basal and activated RNA polymerase II-dependent transcription. The SRB8-11 complex may be involved in the transcriptional repression of a subset of genes regulated by Mediator. It may inhibit the association of the Mediator complex with RNA polymerase II to form the holoenzyme complex. The SRB8-11 complex phosphorylates the C-terminal domain (CTD) of the largest subunit of RNA polymerase II. The chain is RNA polymerase II holoenzyme cyclin-like subunit (SSN8) from Eremothecium gossypii (strain ATCC 10895 / CBS 109.51 / FGSC 9923 / NRRL Y-1056) (Yeast).